The primary structure comprises 215 residues: MAMSLKAEKRPDLRGSVTRKIRKQGYVPAVVYGNKTKSQPISVEAVDFLKTVREVGRNGLISLEVEKGTKHQVMVHDLQMDPLKGDYLHIDFFEVDMSSEIEANVPVRLTGEARGVSEGGVLSQLMYEITVRSLPADIPEEITLDVSSLAIGDSIQIRDVRGNVPVQVVNEDEETVVTVQPPATEKEEETEAAVTDSEPEVINEKEEPAEEAKEE.

The tract at residues glutamate 174–glutamate 215 is disordered. Acidic residues predominate over residues lysine 186–glutamate 215.

This sequence belongs to the bacterial ribosomal protein bL25 family. CTC subfamily. Part of the 50S ribosomal subunit; part of the 5S rRNA/L5/L18/L25 subcomplex. Contacts the 5S rRNA. Binds to the 5S rRNA independently of L5 and L18.

This is one of the proteins that binds to the 5S RNA in the ribosome where it forms part of the central protuberance. In Halalkalibacterium halodurans (strain ATCC BAA-125 / DSM 18197 / FERM 7344 / JCM 9153 / C-125) (Bacillus halodurans), this protein is Large ribosomal subunit protein bL25.